Here is a 214-residue protein sequence, read N- to C-terminus: Osteoclast-stimulating factor 1 (214 aa).

The SH3 domain maps to 12 to 71 (GQVKVYRALFTFDPRTPDELYFEEGDILYISDTSDSNWWKGTCRGRTGLIPSNYVAEQAE). 3 ANK repeats span residues 72 to 101 (SIDNPMHEAAKRGNLSWLRECLDNKVGING), 105 to 135 (AGNTSLYWACHGGHKDVVEILLSQPNCELNQ), and 139 to 168 (LGDTPLHAAAWKGYSDIVEMLLNKNARTDV).

It is found in the cytoplasm. Induces bone resorption, acting probably through a signaling cascade which results in the secretion of factor(s) enhancing osteoclast formation and activity. The protein is Osteoclast-stimulating factor 1 (ostf1) of Danio rerio (Zebrafish).